Here is an 845-residue protein sequence, read N- to C-terminus: Protein translocase subunit SecA (845 aa).

Residues Gln88, 106 to 110, and Asp495 each bind ATP; that span reads GEGKT. The disordered stretch occupies residues 804–838; sequence SNRANRPQKKAKRQPIVKPDKPGRNDPCPCGSGKK. A compositionally biased stretch (basic residues) spans 809-818; the sequence is RPQKKAKRQP. Cys831, Cys833, Cys842, and Cys843 together coordinate Zn(2+).

Belongs to the SecA family. Monomer and homodimer. Part of the essential Sec protein translocation apparatus which comprises SecA, SecYEG and auxiliary proteins SecDF. Other proteins may also be involved. Requires Zn(2+) as cofactor.

The protein resides in the cell inner membrane. It localises to the cytoplasm. It catalyses the reaction ATP + H2O + cellular proteinSide 1 = ADP + phosphate + cellular proteinSide 2.. Functionally, part of the Sec protein translocase complex. Interacts with the SecYEG preprotein conducting channel. Has a central role in coupling the hydrolysis of ATP to the transfer of proteins into and across the cell membrane, serving as an ATP-driven molecular motor driving the stepwise translocation of polypeptide chains across the membrane. This Halothermothrix orenii (strain H 168 / OCM 544 / DSM 9562) protein is Protein translocase subunit SecA.